The following is a 534-amino-acid chain: MAVVYYLLLAGLIACSHALAAGTPALGDDRGRPWPASLAALALDGKLRTDSNATAAASTDFGNITSALPAAVLYPSSTGDLVALLSAANSTPGWPYTIAFRGRGHSLMGQAFAPGGVVVNMASLGDAAAPPRINVSADGRYVDAGGEQVWIDVLRASLARGVAPRSWNDYLYLTVGGTLSNAGISGQAFRHGPQISNVLEMDVITGHGEMVTCSKQLNADLFDAVLGGLGQFGVITRARIAVEPAPARARWVRFVYTDFAAFSADQERLTAPRPGGGGASFGPMSYVEGSVFVNQSLATDLANTGFFTDADVARIVALAGERNATTVYSIEATLNYDNATAAAAAVDQELASVLGTLSYVEGFAFQRDVAYAAFLDRVHGEEVALNKLGLWRVPHPWLNMFVPRSRIADFDRGVFKGILQGTDIVGPLIVYPLNKSMWDDGMSAATPSEDVFYAVSLLFSSVAPNDLARLQEQNRRILRFCDLAGIQYKTYLARHTDRSDWVRHFGAAKWNRFVEMKNKYDPKRLLSPGQDIFN.

The first 18 residues, Met-1–Ala-18, serve as a signal peptide directing secretion. Residues Asn-52, Asn-63, and Asn-89 are each glycosylated (N-linked (GlcNAc...) asparagine). The FAD-binding PCMH-type domain occupies Thr-65–Ala-245. FAD-binding residues include Phe-100, Gly-102, Arg-103, and Gly-104. At His-105 the chain carries Pros-8alpha-FAD histidine. Residues Ser-106 and Gln-110 each contribute to the FAD site. Asn-134 carries N-linked (GlcNAc...) asparagine glycosylation. FAD is bound by residues Asp-169, Thr-174, Ser-180, Ile-184, and Ile-235. Asp-169 provides a ligand contact to N(6)-dimethylallyladenine. Asp-169 serves as a coordination point for trans-zeatin. 3 N-linked (GlcNAc...) asparagine glycosylation sites follow: Asn-294, Asn-323, and Asn-338. Glu-381 serves as a coordination point for N(6)-dimethylallyladenine. Glu-381 is a trans-zeatin binding site. Asn-434 is a glycosylation site (N-linked (GlcNAc...) asparagine). Ser-456 is a binding site for trans-zeatin. The FAD site is built by Tyr-491, Ser-527, and Gln-530.

Belongs to the oxygen-dependent FAD-linked oxidoreductase family. As to quaternary structure, monomer. Requires FAD as cofactor. Glycosylated; with approximately 10 hexose residues per site. Expressed in immature kernels and unpollinated cobs. Weakly expressed in kernels harvested two weeks after anthesis.

It localises to the secreted. Its subcellular location is the extracellular space. The enzyme catalyses N(6)-dimethylallyladenine + A + H2O = 3-methyl-2-butenal + adenine + AH2. With respect to regulation, competitive inhibition by phenylureas. In terms of biological role, catalyzes the oxidation of cytokinins, a family of N(6)-substituted adenine derivatives that are plant hormones, where the substituent is an isopentenyl group. Cleaves trans-zeatin, N(6)-dimethylallyladenine (isopentenyladenine), isopentenyladenosine, zeatin riboside and cis-zeatin, but not dihydrozeatin, kinetin and benzylaminopurine. The sequence is that of Cytokinin dehydrogenase 1 (CKX1) from Zea mays (Maize).